The sequence spans 133 residues: Small ribosomal subunit protein uS9 (133 aa).

The protein belongs to the universal ribosomal protein uS9 family.

The protein is Small ribosomal subunit protein uS9 of Picrophilus torridus (strain ATCC 700027 / DSM 9790 / JCM 10055 / NBRC 100828 / KAW 2/3).